Here is a 628-residue protein sequence, read N- to C-terminus: Kelch-like protein diablo (628 aa).

The tract at residues 1–56 (MGDLPGSTGGGSGPAAAGNASGNASSAGNTGLGVAGTTGVDRPPSPARLSHTSEKH) is disordered. Residues 14-29 (PAAAGNASGNASSAGN) are compositionally biased toward low complexity. The 68-residue stretch at 74 to 141 (CDVVLNVGGR…CYTAHIIVEE (68 aa)) folds into the BTB domain. In terms of domain architecture, BACK spans 176 to 278 (CLGIRAFADT…SPKFLVGTVG (103 aa)). Kelch repeat units lie at residues 325-371 (VLFA…VLND), 373-419 (LYAV…VLDG), 420-466 (FLYA…VLGG), 468-513 (LYAI…VFNN), 515-560 (IYAV…VVNG), and 561-607 (QLYA…VMRA).

Its pathway is protein modification; protein ubiquitination. Its function is as follows. Probable substrate-specific adapter of an E3 ubiquitin-protein ligase complex which mediates the ubiquitination and subsequent proteasomal degradation of target proteins. May have a role in synapse differentiation and growth. The polypeptide is Kelch-like protein diablo (Drosophila pseudoobscura pseudoobscura (Fruit fly)).